The sequence spans 134 residues: Arsenate reductase (134 aa).

Active-site nucleophile residues include cysteine 11, cysteine 83, and cysteine 90. Intrachain disulfides connect cysteine 11–cysteine 83 and cysteine 83–cysteine 90.

This sequence belongs to the low molecular weight phosphotyrosine protein phosphatase family. Thioredoxin-coupled ArsC subfamily.

It is found in the cytoplasm. The catalysed reaction is arsenate + [thioredoxin]-dithiol + H(+) = arsenite + [thioredoxin]-disulfide + H2O. In terms of biological role, catalyzes the reduction of arsenate [As(V)] to arsenite [As(III)]. This is Arsenate reductase from Bacillus cereus (strain AH187).